Here is a 331-residue protein sequence, read N- to C-terminus: Nucleoporin Nup35 (331 aa).

2 disordered regions span residues 1-63 (MEPM…HELN) and 79-110 (AHTA…GLFD). Polar residues-rich tracts occupy residues 8 to 20 (SPVN…QTQY), 35 to 56 (HKNT…SPGG), and 84 to 104 (GANS…TGPP). Residues 187–268 (RLSDFWVTIF…SRCTDRSVID (82 aa)) enclose the RRM Nup35-type domain.

It belongs to the Nup35 family. As to quaternary structure, interacts with Nup154.

It is found in the nucleus. The protein resides in the nuclear pore complex. Its function is as follows. Functions as a component of the nuclear pore complex (NPC). May have a role in the organization of the inner nuclear membrane proteins at the nuclear envelope together with Nup154. The polypeptide is Nucleoporin Nup35 (Drosophila melanogaster (Fruit fly)).